The chain runs to 475 residues: Glycogen synthase (475 aa).

K15 is a binding site for ADP-alpha-D-glucose.

It belongs to the glycosyltransferase 1 family. Bacterial/plant glycogen synthase subfamily.

The catalysed reaction is [(1-&gt;4)-alpha-D-glucosyl](n) + ADP-alpha-D-glucose = [(1-&gt;4)-alpha-D-glucosyl](n+1) + ADP + H(+). It participates in glycan biosynthesis; glycogen biosynthesis. Its function is as follows. Synthesizes alpha-1,4-glucan chains using ADP-glucose. The chain is Glycogen synthase from Anaeromyxobacter dehalogenans (strain 2CP-C).